A 177-amino-acid chain; its full sequence is Large ribosomal subunit protein eL20 (177 aa).

It belongs to the eukaryotic ribosomal protein eL20 family.

The chain is Large ribosomal subunit protein eL20 (RpL18A) from Drosophila melanogaster (Fruit fly).